The following is an 81-amino-acid chain: uncharacterized protein (81 aa).

The N-terminal stretch at Met1 to Ala22 is a signal peptide. Residues His29–Lys81 form a disordered region. The span at Ser30–Gly58 shows a compositional bias: low complexity. Residues Ser59 to Ser75 are compositionally biased toward gly residues.

It is found in the secreted. This is an uncharacterized protein from Dictyostelium discoideum (Social amoeba).